The sequence spans 278 residues: Large ribosomal subunit protein uL2 (278 aa).

A disordered region spans residues Ala208–Lys278. A compositionally biased stretch (basic residues) spans Gly209–Gln219. Over residues Lys258–Ile270 the composition is skewed to basic and acidic residues.

It belongs to the universal ribosomal protein uL2 family. Part of the 50S ribosomal subunit. Forms a bridge to the 30S subunit in the 70S ribosome.

Functionally, one of the primary rRNA binding proteins. Required for association of the 30S and 50S subunits to form the 70S ribosome, for tRNA binding and peptide bond formation. It has been suggested to have peptidyltransferase activity; this is somewhat controversial. Makes several contacts with the 16S rRNA in the 70S ribosome. The chain is Large ribosomal subunit protein uL2 from Lactobacillus delbrueckii subsp. bulgaricus (strain ATCC 11842 / DSM 20081 / BCRC 10696 / JCM 1002 / NBRC 13953 / NCIMB 11778 / NCTC 12712 / WDCM 00102 / Lb 14).